The sequence spans 97 residues: uncharacterized protein (97 aa).

This is an uncharacterized protein from Alcelaphine herpesvirus 1 (strain C500) (AlHV-1).